We begin with the raw amino-acid sequence, 196 residues long: Translation machinery-associated protein 22 (196 aa).

One can recognise an SUI1 domain in the interval V97–L168.

Belongs to the DENR family. As to quaternary structure, interacts with the 40S ribosomal subunit.

It localises to the cytoplasm. The polypeptide is Translation machinery-associated protein 22 (TMA22) (Candida glabrata (strain ATCC 2001 / BCRC 20586 / JCM 3761 / NBRC 0622 / NRRL Y-65 / CBS 138) (Yeast)).